A 222-amino-acid chain; its full sequence is Zinc finger C2HC domain-containing protein 1B (222 aa).

A C2HC/C3H-type 1 zinc finger spans residues Glu14–Arg43. Zn(2+) contacts are provided by Cys18, Cys21, His33, and Cys37. The interval Phe48–Asn78 is disordered. A C2HC/C3H-type 2; degenerate zinc finger spans residues Asp117 to Arg146. Residues Pro196–Asp222 are disordered.

This sequence belongs to the ZC2HC1 family. The cofactor is Zn(2+).

The chain is Zinc finger C2HC domain-containing protein 1B (ZC2HC1B) from Homo sapiens (Human).